A 572-amino-acid polypeptide reads, in one-letter code: Urease subunit alpha (572 aa).

The region spanning 132–572 (GGFDSHIHFI…LPMAQRYFMY (441 aa)) is the Urease domain. Ni(2+)-binding residues include histidine 137, histidine 139, and lysine 220. N6-carboxylysine is present on lysine 220. Histidine 222 serves as a coordination point for substrate. The Ni(2+) site is built by histidine 249 and histidine 275. Histidine 323 serves as the catalytic Proton donor. Position 363 (aspartate 363) interacts with Ni(2+).

This sequence belongs to the metallo-dependent hydrolases superfamily. Urease alpha subunit family. Heterotrimer of UreA (gamma), UreB (beta) and UreC (alpha) subunits. Three heterotrimers associate to form the active enzyme. Ni cation serves as cofactor. In terms of processing, carboxylation allows a single lysine to coordinate two nickel ions.

Its subcellular location is the cytoplasm. It catalyses the reaction urea + 2 H2O + H(+) = hydrogencarbonate + 2 NH4(+). It functions in the pathway nitrogen metabolism; urea degradation; CO(2) and NH(3) from urea (urease route): step 1/1. The protein is Urease subunit alpha of Bradyrhizobium diazoefficiens (strain JCM 10833 / BCRC 13528 / IAM 13628 / NBRC 14792 / USDA 110).